Consider the following 398-residue polypeptide: MNSLDFDRKPEDTRVVVAMSGGVDSSVVAGLLKREGYDVLGITLQLYDHGAAVHRAGSCCAGQDIDDARRVCETIGIPHYVLDYEARFRETVINPFAESYIAGETPIPCVACNQTVKFADLLATAKELGADALATGHYIRSRPSPKPRYAGQRALYRPADAERDQSYFLFATTQEQIDYLRFPLGGLPKSETRALAEEMGLVVAKKADSQDICFVPQGKYSDIVSKLKPNAALAGEIVHLDGRVLGAHEGILHYTIGQRRGIGVATGEPLYVVYLDSRSRRVIVGPKEALETRRVYLRDVNWLGDEELEAAAGQGFECFAKVRSTRRPAPAVLKSDAEGLYVELVEGEAGVAPGQACALYSGTGEDARVYGGGFIRRSEREPAAEAALKALLQAPAAA.

Residues 18–25 (AMSGGVDS) and Leu-44 contribute to the ATP site. Catalysis depends on Cys-112, which acts as the Nucleophile. A disulfide bond links Cys-112 and Cys-213. Gly-136 is an ATP binding site. Residues 163 to 165 (RDQ) are interaction with tRNA. Cys-213 (cysteine persulfide intermediate) is an active-site residue.

Belongs to the MnmA/TRMU family.

It is found in the cytoplasm. It catalyses the reaction S-sulfanyl-L-cysteinyl-[protein] + uridine(34) in tRNA + AH2 + ATP = 2-thiouridine(34) in tRNA + L-cysteinyl-[protein] + A + AMP + diphosphate + H(+). Functionally, catalyzes the 2-thiolation of uridine at the wobble position (U34) of tRNA, leading to the formation of s(2)U34. The chain is tRNA-specific 2-thiouridylase MnmA from Rhizobium meliloti (strain 1021) (Ensifer meliloti).